The following is a 348-amino-acid chain: Protein-glutamate methylesterase/protein-glutamine glutaminase 5 (348 aa).

The region spanning 8–125 is the Response regulatory domain; sequence RVLVVDDSAF…TERLYELGGE (118 aa). Position 59 is a 4-aspartylphosphate (Asp59). A CheB-type methylesterase domain is found at 157–348; that stretch reads RAAAKSLVVV…MLALLRRHVR (192 aa). Active-site residues include Ser169, His196, and Asp292.

This sequence belongs to the CheB family. Phosphorylated by CheA. Phosphorylation of the N-terminal regulatory domain activates the methylesterase activity.

The protein resides in the cytoplasm. The catalysed reaction is [protein]-L-glutamate 5-O-methyl ester + H2O = L-glutamyl-[protein] + methanol + H(+). It catalyses the reaction L-glutaminyl-[protein] + H2O = L-glutamyl-[protein] + NH4(+). In terms of biological role, involved in chemotaxis. Part of a chemotaxis signal transduction system that modulates chemotaxis in response to various stimuli. Catalyzes the demethylation of specific methylglutamate residues introduced into the chemoreceptors (methyl-accepting chemotaxis proteins or MCP) by CheR. Also mediates the irreversible deamidation of specific glutamine residues to glutamic acid. This Myxococcus xanthus (strain DK1622) protein is Protein-glutamate methylesterase/protein-glutamine glutaminase 5.